The sequence spans 89 residues: Small ribosomal subunit protein uS14 (89 aa).

The protein belongs to the universal ribosomal protein uS14 family. As to quaternary structure, part of the 30S ribosomal subunit. Contacts proteins S3 and S10.

Its function is as follows. Binds 16S rRNA, required for the assembly of 30S particles and may also be responsible for determining the conformation of the 16S rRNA at the A site. This chain is Small ribosomal subunit protein uS14, found in Latilactobacillus sakei subsp. sakei (strain 23K) (Lactobacillus sakei subsp. sakei).